We begin with the raw amino-acid sequence, 222 residues long: 23kDa protein (222 aa).

Positions methionine 1 to arginine 12 are enriched in polar residues. The tract at residues methionine 1 to arginine 21 is disordered.

Functionally, may act as a regulatory factor during viral transcription. The polypeptide is 23kDa protein (Indian citrus ringspot virus (isolate Kinnow mandarin/India/K1/1996) (ICRSV)).